Consider the following 398-residue polypeptide: S-adenosylmethionine synthase (398 aa).

Histidine 17 serves as a coordination point for ATP. Aspartate 19 provides a ligand contact to Mg(2+). A K(+)-binding site is contributed by glutamate 45. Residues glutamate 58 and glutamine 101 each contribute to the L-methionine site. Positions 101-111 are flexible loop; that stretch reads QSPDIAQGVDK. Residues 176–178, 243–244, aspartate 252, 258–259, and lysine 279 each bind ATP; these read DGK, RF, and RK. Aspartate 252 provides a ligand contact to L-methionine. Residue lysine 283 coordinates L-methionine.

This sequence belongs to the AdoMet synthase family. As to quaternary structure, homotetramer; dimer of dimers. Requires Mg(2+) as cofactor. K(+) serves as cofactor.

The protein localises to the cytoplasm. It carries out the reaction L-methionine + ATP + H2O = S-adenosyl-L-methionine + phosphate + diphosphate. It functions in the pathway amino-acid biosynthesis; S-adenosyl-L-methionine biosynthesis; S-adenosyl-L-methionine from L-methionine: step 1/1. In terms of biological role, catalyzes the formation of S-adenosylmethionine (AdoMet) from methionine and ATP. The overall synthetic reaction is composed of two sequential steps, AdoMet formation and the subsequent tripolyphosphate hydrolysis which occurs prior to release of AdoMet from the enzyme. In Staphylococcus aureus (strain Mu3 / ATCC 700698), this protein is S-adenosylmethionine synthase.